We begin with the raw amino-acid sequence, 1399 residues long: DNA-directed RNA polymerase subunit beta' (1399 aa).

The Zn(2+) site is built by cysteine 70, cysteine 72, cysteine 85, and cysteine 88. Mg(2+)-binding residues include aspartate 460, aspartate 462, and aspartate 464. Residues cysteine 814, cysteine 888, cysteine 895, and cysteine 898 each coordinate Zn(2+).

The protein belongs to the RNA polymerase beta' chain family. As to quaternary structure, the RNAP catalytic core consists of 2 alpha, 1 beta, 1 beta' and 1 omega subunit. When a sigma factor is associated with the core the holoenzyme is formed, which can initiate transcription. Mg(2+) is required as a cofactor. Zn(2+) serves as cofactor.

The enzyme catalyses RNA(n) + a ribonucleoside 5'-triphosphate = RNA(n+1) + diphosphate. In terms of biological role, DNA-dependent RNA polymerase catalyzes the transcription of DNA into RNA using the four ribonucleoside triphosphates as substrates. This Ectopseudomonas mendocina (strain ymp) (Pseudomonas mendocina) protein is DNA-directed RNA polymerase subunit beta'.